The chain runs to 322 residues: Lung adenoma susceptibility protein 2 homolog (322 aa).

The signal sequence occupies residues Met1–Ser31. The segment covering Thr148–Gly157 has biased composition (basic residues). Disordered stretches follow at residues Thr148–Thr175 and Phe228–Ser248. Ser161 is subject to Phosphoserine. The span at Ser236 to Lys247 shows a compositional bias: polar residues.

The protein localises to the secreted. Might play a role in cell proliferation. The chain is Lung adenoma susceptibility protein 2 homolog (LAS2) from Macaca fascicularis (Crab-eating macaque).